The sequence spans 415 residues: MKFPWLLLVKGAASVAAQKPLATSGSGQVLGTFNLEDIINASPLLSFHRDIVKIPSTTDNEYEVGQFIGDFLEQKHFTVEKQSISDSRFNVYAYQGNNSLPDILVTSHIDTVPPFLPYNLDYPILGGGHEFDRQSVLIAGRGTVDAKGSVAAQIFAVLEILEEKPDASIGLLFVVGEEKGGIGMETFSKNPSPSSFHTVIFGEPTGLNLVSGHKGVIGFNIKATGRAAHSGYPWLGKNAISALLPVASFTERLGEIPFQDGGLPSSLKYGNSTVNLGVIQGGVAVNVVPDSAEAIFSVRVAAGTPDESKSIITREVNKFTKNDPNIEVAFYPGGLSPTDLDTDVEGFDIITVNYGTDVPKLAIHGGGDRVVKRYLYGPGSILVAHGEDEALTVGDLEGAVQGYRVLIEKALSRDV.

An N-terminal signal peptide occupies residues 1-17; that stretch reads MKFPWLLLVKGAASVAA. Asn-97 carries N-linked (GlcNAc...) asparagine glycosylation. Asp-145 is a Zn(2+) binding site. Glu-177 acts as the Proton acceptor in catalysis. A Zn(2+)-binding site is contributed by Glu-178. Asn-271 carries N-linked (GlcNAc...) asparagine glycosylation.

This sequence belongs to the peptidase M20A family. It depends on Zn(2+) as a cofactor.

It localises to the secreted. The chain is Probable carboxypeptidase ACLA_013260 from Aspergillus clavatus (strain ATCC 1007 / CBS 513.65 / DSM 816 / NCTC 3887 / NRRL 1 / QM 1276 / 107).